An 869-amino-acid polypeptide reads, in one-letter code: Protein translocase subunit SecA (869 aa).

ATP is bound by residues glutamine 85, 103 to 107, and aspartate 508; that span reads GEGKT.

Belongs to the SecA family. In terms of assembly, monomer and homodimer. Part of the essential Sec protein translocation apparatus which comprises SecA, SecYEG and auxiliary proteins SecDF. Other proteins may also be involved.

It localises to the cell membrane. Its subcellular location is the cytoplasm. The enzyme catalyses ATP + H2O + cellular proteinSide 1 = ADP + phosphate + cellular proteinSide 2.. Part of the Sec protein translocase complex. Interacts with the SecYEG preprotein conducting channel. Has a central role in coupling the hydrolysis of ATP to the transfer of proteins into and across the cell membrane, serving as an ATP-driven molecular motor driving the stepwise translocation of polypeptide chains across the membrane. The sequence is that of Protein translocase subunit SecA from Deinococcus deserti (strain DSM 17065 / CIP 109153 / LMG 22923 / VCD115).